The chain runs to 924 residues: Probable dipeptidyl-aminopeptidase B (924 aa).

A disordered region spans residues 1–104 (MPPFTYSDDT…DQRSPGDGQR (104 aa)). At 1 to 111 (MPPFTYSDDT…GQRMDRSLRR (111 aa)) the chain is on the cytoplasmic side. The span at 9–23 (DTLRSGRDRFRDHSP) shows a compositional bias: basic and acidic residues. Positions 31-43 (SQETDSSASTTSI) are enriched in polar residues. 2 stretches are compositionally biased toward basic and acidic residues: residues 47 to 58 (RIQERLDTKEFT) and 92 to 104 (SRSD…DGQR). A helical; Signal-anchor for type II membrane protein transmembrane segment spans residues 112–132 (WLFIVSGVLVATWVIGLFVFV). Residues 133–924 (SSKAYKPSSS…GMKKRAAPTA (792 aa)) lie on the Vacuolar side of the membrane. Residues Asn-231 and Asn-364 are each glycosylated (N-linked (GlcNAc...) asparagine). The active-site Charge relay system is Ser-768. Asn-827 is a glycosylation site (N-linked (GlcNAc...) asparagine). Catalysis depends on charge relay system residues Asp-845 and His-878.

The protein belongs to the peptidase S9B family.

The protein localises to the vacuole membrane. The enzyme catalyses Release of an N-terminal dipeptide, Xaa-Yaa-|-Zaa-, from a polypeptide, preferentially when Yaa is Pro, provided Zaa is neither Pro nor hydroxyproline.. Its function is as follows. Type IV dipeptidyl-peptidase which removes N-terminal dipeptides sequentially from polypeptides having unsubstituted N-termini provided that the penultimate residue is proline. This Sordaria macrospora (strain ATCC MYA-333 / DSM 997 / K(L3346) / K-hell) protein is Probable dipeptidyl-aminopeptidase B (DAPB).